The following is an 82-amino-acid chain: Small ribosomal subunit protein eS17 (82 aa).

The protein belongs to the eukaryotic ribosomal protein eS17 family.

This Sulfolobus acidocaldarius (strain ATCC 33909 / DSM 639 / JCM 8929 / NBRC 15157 / NCIMB 11770) protein is Small ribosomal subunit protein eS17.